A 216-amino-acid polypeptide reads, in one-letter code: Vascular endothelial growth factor A (216 aa).

A signal peptide spans 1–26 (MNFLLTWIHWGLAALLYLQSAELSKA). Disulfide bonds link cysteine 52–cysteine 94, cysteine 83–cysteine 128, and cysteine 87–cysteine 130. An N-linked (GlcNAc...) asparagine glycan is attached at asparagine 101. The span at 132-141 (PKKDVKNKQE) shows a compositional bias: basic and acidic residues. The segment at 132–167 (PKKDVKNKQEKKSKRGKGKGQKRKRKKGRYKPPSFH) is disordered. Residues 142-161 (KKSKRGKGKGQKRKRKKGRY) show a composition bias toward basic residues.

It belongs to the PDGF/VEGF growth factor family. As to quaternary structure, homodimer; disulfide-linked. Also found as heterodimer with PGF.

In terms of biological role, growth factor active in angiogenesis, vasculogenesis and endothelial cell growth. Induces endothelial cell proliferation, promotes cell migration, inhibits apoptosis and induces permeabilization of blood vessels. Binds to the FLT1/VEGFR1 and KDR/VEGFR2 receptors, heparan sulfate and heparin. The polypeptide is Vascular endothelial growth factor A (VEGFA) (Gallus gallus (Chicken)).